We begin with the raw amino-acid sequence, 62 residues long: High-potential iron-sulfur protein (62 aa).

Residues cysteine 22, cysteine 25, cysteine 40, and cysteine 55 each coordinate [4Fe-4S] cluster.

The protein belongs to the high-potential iron-sulfur protein (HiPIP) family. Homodimer.

Specific class of high-redox-potential 4Fe-4S ferredoxins. Functions in anaerobic electron transport in most purple and in some other photosynthetic bacteria and in at least one genus (Paracoccus) of halophilic, denitrifying bacteria. The chain is High-potential iron-sulfur protein (hip) from Rhodocyclus tenuis (Rhodospirillum tenue).